A 134-amino-acid polypeptide reads, in one-letter code: MASKFRLQIVTPDRTFLDEEVEMAVVRTVSGDEGILSDHMLMVTPLKIGKMKIQIGDELKEATIAGGFIQVDQDKTIIITDAAEWPEEIDVSRAEEAKQRAEERLQKEREEVDTFRAEIALKKATNRLGLTKNK.

The protein belongs to the ATPase epsilon chain family. As to quaternary structure, F-type ATPases have 2 components, CF(1) - the catalytic core - and CF(0) - the membrane proton channel. CF(1) has five subunits: alpha(3), beta(3), gamma(1), delta(1), epsilon(1). CF(0) has three main subunits: a, b and c.

Its subcellular location is the cell membrane. Its function is as follows. Produces ATP from ADP in the presence of a proton gradient across the membrane. In Alkaliphilus metalliredigens (strain QYMF), this protein is ATP synthase epsilon chain.